We begin with the raw amino-acid sequence, 466 residues long: Ribulose bisphosphate carboxylase large chain (466 aa).

The residue at position 5 (Lys5) is an N6,N6,N6-trimethyllysine. Positions 114 and 164 each coordinate substrate. Catalysis depends on Lys166, which acts as the Proton acceptor. Position 168 (Lys168) interacts with substrate. Residues Lys192, Asp194, and Glu195 each contribute to the Mg(2+) site. The residue at position 192 (Lys192) is an N6-carboxylysine. The active-site Proton acceptor is the His285. The substrate site is built by Arg286, His318, and Ser370.

The protein belongs to the RuBisCO large chain family. Type I subfamily. Heterohexadecamer of 8 large chains and 8 small chains; disulfide-linked. The disulfide link is formed within the large subunit homodimers. The cofactor is Mg(2+). In terms of processing, the disulfide bond which can form in the large chain dimeric partners within the hexadecamer appears to be associated with oxidative stress and protein turnover.

Its subcellular location is the plastid. It localises to the chloroplast. It carries out the reaction 2 (2R)-3-phosphoglycerate + 2 H(+) = D-ribulose 1,5-bisphosphate + CO2 + H2O. The enzyme catalyses D-ribulose 1,5-bisphosphate + O2 = 2-phosphoglycolate + (2R)-3-phosphoglycerate + 2 H(+). RuBisCO catalyzes two reactions: the carboxylation of D-ribulose 1,5-bisphosphate, the primary event in carbon dioxide fixation, as well as the oxidative fragmentation of the pentose substrate in the photorespiration process. Both reactions occur simultaneously and in competition at the same active site. This Bixa orellana (Lipstick tree) protein is Ribulose bisphosphate carboxylase large chain.